We begin with the raw amino-acid sequence, 80 residues long: Putative membrane protein insertion efficiency factor (80 aa).

The disordered stretch occupies residues 61-80 (KTGKDPIPDHFSLKRNQEGE). Positions 62–80 (TGKDPIPDHFSLKRNQEGE) are enriched in basic and acidic residues.

This sequence belongs to the UPF0161 family.

Its subcellular location is the cell membrane. Functionally, could be involved in insertion of integral membrane proteins into the membrane. The protein is Putative membrane protein insertion efficiency factor of Streptococcus pneumoniae (strain CGSP14).